The sequence spans 382 residues: Glucose-1-phosphate adenylyltransferase (382 aa).

Residues Tyr-100, Gly-165, 180 to 181 (EK), and Ser-191 contribute to the alpha-D-glucose 1-phosphate site.

It belongs to the bacterial/plant glucose-1-phosphate adenylyltransferase family. Homotetramer.

The catalysed reaction is alpha-D-glucose 1-phosphate + ATP + H(+) = ADP-alpha-D-glucose + diphosphate. The protein operates within glycan biosynthesis; glycogen biosynthesis. Its function is as follows. Involved in the biosynthesis of ADP-glucose, a building block required for the elongation reactions to produce glycogen. Catalyzes the reaction between ATP and alpha-D-glucose 1-phosphate (G1P) to produce pyrophosphate and ADP-Glc. This Clostridium novyi (strain NT) protein is Glucose-1-phosphate adenylyltransferase.